Here is a 250-residue protein sequence, read N- to C-terminus: Beta-crystallin B1 (250 aa).

Over residues 1-13 the composition is skewed to polar residues; it reads MSQAAKASATTAV. Residues 1–49 are disordered; the sequence is MSQAAKASATTAVNPGPDGKGKGAPSTGPAPAPGPTPVPASVPRPAAKV. Ser-2 is modified (N-acetylserine). The interval 2-56 is N-terminal arm; sequence SQAAKASATTAVNPGPDGKGKGAPSTGPAPAPGPTPVPASVPRPAAKVGDLPPGS. Over residues 28–42 the composition is skewed to pro residues; it reads GPAPAPGPTPVPASV. 2 consecutive Beta/gamma crystallin 'Greek key' domains span residues 57–96 and 97–141; these read YRLI…IVVS and GPWV…RPIR. The segment at 142 to 146 is connecting peptide; the sequence is MDSQE. 2 consecutive Beta/gamma crystallin 'Greek key' domains span residues 147 to 188 and 189 to 231; these read HKIC…TVSG and GTWV…RRLR. A C-terminal arm region spans residues 233 to 250; sequence RQWHQEGCFPVLTAEPPK.

Belongs to the beta/gamma-crystallin family. Homo/heterodimer, or complexes of higher-order. The structure of beta-crystallin oligomers seems to be stabilized through interactions between the N-terminal arms. Post-translationally, specific cleavages in the N-terminal arm occur during lens maturation and give rise to truncated forms, leading to impaired oligomerization and protein insolubilization. The protease responsible for this partial degradation could be calpain II.

In terms of biological role, crystallins are the dominant structural components of the vertebrate eye lens. This is Beta-crystallin B1 (Crybb1) from Mus musculus (Mouse).